The following is a 119-amino-acid chain: Class I hydrophobin 2 (119 aa).

The signal sequence occupies residues 1 to 22 (MFARISTIITTLFFAMLAAATA). 4 disulfide bridges follow: Cys36–Cys97, Cys45–Cys91, Cys46–Cys79, and Cys98–Cys112.

This sequence belongs to the fungal hydrophobin family. In terms of assembly, self-assembles to form functional amyloid fibrils called rodlets. Self-assembly into fibrillar rodlets occurs spontaneously at hydrophobic:hydrophilic interfaces and the rodlets further associate laterally to form amphipathic monolayers.

The protein resides in the secreted. It localises to the cell wall. Its function is as follows. Aerial growth, conidiation, and dispersal of filamentous fungi in the environment rely upon a capability of their secreting small amphipathic proteins called hydrophobins (HPBs) with low sequence identity. Class I can self-assemble into an outermost layer of rodlet bundles on aerial cell surfaces, conferring cellular hydrophobicity that supports fungal growth, development and dispersal; whereas Class II form highly ordered films at water-air interfaces through intermolecular interactions but contribute nothing to the rodlet structure. Abh2 is a class I hydrophobin involved in the emergence of aerial hyphae and strands. This Agaricus bisporus (White button mushroom) protein is Class I hydrophobin 2.